Consider the following 336-residue polypeptide: Protein-glutamate methylesterase/protein-glutamine glutaminase 3 (336 aa).

The 118-residue stretch at 2-119 (KIAIVNDMPM…PNPKEAAAPL (118 aa)) folds into the Response regulatory domain. D53 is subject to 4-aspartylphosphate. The region spanning 147–336 (PARRDRLVAI…APRLVEVFTQ (190 aa)) is the CheB-type methylesterase domain. Residues S159, H186, and D279 contribute to the active site.

The protein belongs to the CheB family. In terms of processing, phosphorylated by CheA. Phosphorylation of the N-terminal regulatory domain activates the methylesterase activity.

The protein resides in the cytoplasm. It catalyses the reaction [protein]-L-glutamate 5-O-methyl ester + H2O = L-glutamyl-[protein] + methanol + H(+). The enzyme catalyses L-glutaminyl-[protein] + H2O = L-glutamyl-[protein] + NH4(+). In terms of biological role, involved in chemotaxis. Part of a chemotaxis signal transduction system that modulates chemotaxis in response to various stimuli. Catalyzes the demethylation of specific methylglutamate residues introduced into the chemoreceptors (methyl-accepting chemotaxis proteins or MCP) by CheR. Also mediates the irreversible deamidation of specific glutamine residues to glutamic acid. This Pseudomonas savastanoi pv. phaseolicola (strain 1448A / Race 6) (Pseudomonas syringae pv. phaseolicola (strain 1448A / Race 6)) protein is Protein-glutamate methylesterase/protein-glutamine glutaminase 3.